Reading from the N-terminus, the 306-residue chain is Putative transcriptional regulator (306 aa).

In terms of domain architecture, HTH lysR-type spans 1–61; the sequence is MIKRNLNDLL…TRTTRSVSPT (61 aa). Residues 21-40 constitute a DNA-binding region (H-T-H motif); it reads FTRAAAQLGVTQSALSQSIS.

It belongs to the LysR transcriptional regulatory family.

Its function is as follows. May have a role in the regulation of oprD expression. This Pseudomonas aeruginosa (strain ATCC 15692 / DSM 22644 / CIP 104116 / JCM 14847 / LMG 12228 / 1C / PRS 101 / PAO1) protein is Putative transcriptional regulator.